Here is a 697-residue protein sequence, read N- to C-terminus: Potassium channel KAT2 (697 aa).

At 1–63 the chain is on the cytoplasmic side; it reads MSISCTRNFF…PFDPRFRGWE (63 aa). Residues 64–84 traverse the membrane as a helical segment; sequence MWLVILVIYSAWICPFEFAFI. Over 85 to 91 the chain is Extracellular; that stretch reads TYKKDAL. Residues 92-112 traverse the membrane as a helical segment; that stretch reads FIIDNIVNGFFAIDIILTFFV. The Cytoplasmic portion of the chain corresponds to 113-134; the sequence is AYLDSHSYLLVDKPKKIAIRYL. A helical transmembrane segment spans residues 135–155; it reads STWFAFDVCSTAPFQSLSLLF. Residues 156 to 165 lie on the Extracellular side of the membrane; that stretch reads KYNGSEIGFR. Asparagine 158 carries an N-linked (GlcNAc...) asparagine glycan. A helical; Voltage-sensor membrane pass occupies residues 166–186; sequence VLSMLRLWRLRRVSSLFARLE. Topologically, residues 187 to 200 are cytoplasmic; sequence KDIRFNYFWTRCTK. Residues 201–221 traverse the membrane as a helical segment; that stretch reads LISVTLFAVHCAGCFAYLIAD. The Extracellular segment spans residues 222 to 248; sequence QYHDPTKTWIGAVYPNFKETSVWSRYV. Positions 249–268 form an intramembrane region, pore-forming; the sequence is TALYWSITTLTTTGYGDLHA. Topologically, residues 269–272 are extracellular; that stretch reads ENPR. The helical transmembrane segment at 273-293 threads the bilayer; that stretch reads EMLFFVFFMLFNLGFTSYLIG. Residues 294-697 are Cytoplasmic-facing; the sequence is NMTNLVVHWT…HLYILINENS (404 aa). 377–496 lines the a nucleoside 3',5'-cyclic phosphate pocket; that stretch reads LFHGVSRNFL…RVIMNNLFMK (120 aa). In terms of domain architecture, KHA spans 629–697; the sequence is RVTIHLKSRD…HLYILINENS (69 aa).

It belongs to the potassium channel family. Plant (TC 1.A.1.4) subfamily. As to quaternary structure, the potassium channel is probably composed of a homo- or heterotetrameric complex of pore-forming subunits. May interact with KAT1. Interacts with SLAC1. As to expression, expressed in guard cells of hypocotyls, stems leaves and petioles. Detected also in the phloem of minor veins and in flower at a lower level.

The protein localises to the membrane. In terms of biological role, highly selective inward-rectifying potassium channel. This voltage-dependent channel could mediate long-term potassium influx into guard cells leading to stomatal opening. Assuming opened or closed conformations in response to the voltage difference across the membrane, the channel is activated by hyperpolarization. The channel activity is enhanced upon external acidification. The chain is Potassium channel KAT2 (KAT2) from Arabidopsis thaliana (Mouse-ear cress).